The primary structure comprises 504 residues: 2-isopropylmalate synthase (504 aa).

Positions 6 to 267 (IIIFDTTLRD…YTGIISKEIY (262 aa)) constitute a Pyruvate carboxyltransferase domain. Mn(2+) is bound by residues aspartate 15, histidine 201, histidine 203, and asparagine 237. A regulatory domain region spans residues 391-504 (EITDLLQSSG…LNSYLRIHKN (114 aa)).

Belongs to the alpha-IPM synthase/homocitrate synthase family. LeuA type 1 subfamily. As to quaternary structure, homodimer. The cofactor is Mn(2+).

The protein localises to the cytoplasm. The catalysed reaction is 3-methyl-2-oxobutanoate + acetyl-CoA + H2O = (2S)-2-isopropylmalate + CoA + H(+). It participates in amino-acid biosynthesis; L-leucine biosynthesis; L-leucine from 3-methyl-2-oxobutanoate: step 1/4. Functionally, catalyzes the condensation of the acetyl group of acetyl-CoA with 3-methyl-2-oxobutanoate (2-ketoisovalerate) to form 3-carboxy-3-hydroxy-4-methylpentanoate (2-isopropylmalate). This chain is 2-isopropylmalate synthase, found in Campylobacter concisus (strain 13826).